Here is a 285-residue protein sequence, read N- to C-terminus: Polyamine aminopropyltransferase (285 aa).

The PABS domain occupies 5 to 241 (QDWFTESYPD…GWWSATMAGK (237 aa)). Glutamine 35 contributes to the S-methyl-5'-thioadenosine binding site. Spermidine-binding residues include histidine 66 and aspartate 90. Residues aspartate 110 and 141-142 (DG) contribute to the S-methyl-5'-thioadenosine site. The Proton acceptor role is filled by aspartate 160. 160-163 (DSTD) lines the spermidine pocket. Proline 167 serves as a coordination point for S-methyl-5'-thioadenosine.

Belongs to the spermidine/spermine synthase family. As to quaternary structure, homodimer or homotetramer.

It is found in the cytoplasm. It carries out the reaction S-adenosyl 3-(methylsulfanyl)propylamine + putrescine = S-methyl-5'-thioadenosine + spermidine + H(+). Its pathway is amine and polyamine biosynthesis; spermidine biosynthesis; spermidine from putrescine: step 1/1. Its function is as follows. Catalyzes the irreversible transfer of a propylamine group from the amino donor S-adenosylmethioninamine (decarboxy-AdoMet) to putrescine (1,4-diaminobutane) to yield spermidine. The sequence is that of Polyamine aminopropyltransferase from Methylococcus capsulatus (strain ATCC 33009 / NCIMB 11132 / Bath).